The following is a 98-amino-acid chain: Citrate lyase acyl carrier protein (98 aa).

Ser-14 is modified (O-(phosphoribosyl dephospho-coenzyme A)serine).

The protein belongs to the CitD family. In terms of assembly, oligomer with a subunit composition of (alpha,beta,gamma)6.

Its subcellular location is the cytoplasm. Functionally, covalent carrier of the coenzyme of citrate lyase. This chain is Citrate lyase acyl carrier protein, found in Citrobacter koseri (strain ATCC BAA-895 / CDC 4225-83 / SGSC4696).